The primary structure comprises 374 residues: UDP-N-acetylglucosamine--N-acetylmuramyl-(pentapeptide) pyrophosphoryl-undecaprenol N-acetylglucosamine transferase (374 aa).

UDP-N-acetyl-alpha-D-glucosamine contacts are provided by residues 13-15 (TGG), N124, R165, S193, and Q294.

Belongs to the glycosyltransferase 28 family. MurG subfamily.

The protein resides in the cell inner membrane. The catalysed reaction is di-trans,octa-cis-undecaprenyl diphospho-N-acetyl-alpha-D-muramoyl-L-alanyl-D-glutamyl-meso-2,6-diaminopimeloyl-D-alanyl-D-alanine + UDP-N-acetyl-alpha-D-glucosamine = di-trans,octa-cis-undecaprenyl diphospho-[N-acetyl-alpha-D-glucosaminyl-(1-&gt;4)]-N-acetyl-alpha-D-muramoyl-L-alanyl-D-glutamyl-meso-2,6-diaminopimeloyl-D-alanyl-D-alanine + UDP + H(+). It participates in cell wall biogenesis; peptidoglycan biosynthesis. Cell wall formation. Catalyzes the transfer of a GlcNAc subunit on undecaprenyl-pyrophosphoryl-MurNAc-pentapeptide (lipid intermediate I) to form undecaprenyl-pyrophosphoryl-MurNAc-(pentapeptide)GlcNAc (lipid intermediate II). The sequence is that of UDP-N-acetylglucosamine--N-acetylmuramyl-(pentapeptide) pyrophosphoryl-undecaprenol N-acetylglucosamine transferase from Rhizobium johnstonii (strain DSM 114642 / LMG 32736 / 3841) (Rhizobium leguminosarum bv. viciae).